The following is a 316-amino-acid chain: GPI-specific phospholipase A2-like PGAP3 (316 aa).

Residues 1–18 (MAPFLVLFLAGVVAASRG) form the signal peptide. Topologically, residues 19-93 (DREPVYRDCV…QFHGKWPFSR (75 aa)) are lumenal. A glycan (N-linked (GlcNAc...) asparagine) is linked at asparagine 35. Residues 94-114 (FLFFQEPASALASFLNGVASL) form a helical membrane-spanning segment. At 115–132 (LMLLRYRSSVPSSCQMYR) the chain is on the cytoplasmic side. Residues 133–153 (TCLAFSMVSVNAWFWSTIFHT) traverse the membrane as a helical segment. Residues 154-163 (RDTALTEKMD) are Lumenal-facing. The chain crosses the membrane as a helical span at residues 164 to 180 (YFCASSVILHSIYLCCM). The Cytoplasmic segment spans residues 181 to 182 (RT). A helical membrane pass occupies residues 183 to 203 (FGLQYPSIANGFGAFLVLLFA). Over 204–218 (CHVSYLTLGRFDYSY) the chain is Lumenal. The helical transmembrane segment at 219–239 (NMAANTGFGVLNLMWWLAWCF) threads the bilayer. Residues 240–251 (RRRFHQPYLWKC) are Cytoplasmic-facing. The chain crosses the membrane as a helical span at residues 252–272 (VLVVISLQSLALLELLDFPPV). Methionine 273 is a topological domain (lumenal). Residues 274–293 (WILDAHALWHFSTVPLHFLF) traverse the membrane as a helical segment. Topologically, residues 294–316 (YSFLKDDSLYLLKINHDDIPKLD) are cytoplasmic.

The protein belongs to the PGAP3 family.

The protein resides in the golgi apparatus membrane. Involved in the fatty acid remodeling steps of GPI-anchor maturation where the unsaturated acyl chain at sn-2 of inositol phosphate is replaced by a saturated stearoyl chain. May catalyze the first step of the fatty acid remodeling, by removing the unsaturated acyl chain at sn-2 of inositol phosphate, generating a lyso-GPI intermediate. The fatty acid remodeling steps is critical for the integration of GPI-APs into lipid rafts. The sequence is that of GPI-specific phospholipase A2-like PGAP3 from Xenopus tropicalis (Western clawed frog).